The primary structure comprises 552 residues: Phosphoglucomutase (552 aa).

S143 functions as the Phosphoserine intermediate in the catalytic mechanism. Positions 143, 295, 297, and 299 each coordinate Mg(2+).

This sequence belongs to the phosphohexose mutase family. Requires Mg(2+) as cofactor.

It carries out the reaction alpha-D-glucose 1-phosphate = alpha-D-glucose 6-phosphate. It participates in glycolipid metabolism; diglucosyl-diacylglycerol biosynthesis. In terms of biological role, catalyzes the interconversion between glucose-6-phosphate and alpha-glucose-1-phosphate. This is the first step in the biosynthesis of diglucosyl-diacylglycerol (Glc2-DAG), i.e. the predominant glycolipid found in the S.aureus membrane, which is also used as a membrane anchor for lipoteichoic acid (LTA). The sequence is that of Phosphoglucomutase (pgcA) from Staphylococcus aureus (strain bovine RF122 / ET3-1).